We begin with the raw amino-acid sequence, 183 residues long: Nascent polypeptide-associated complex subunit beta (183 aa).

One can recognise an NAC-A/B domain in the interval 62–127; that stretch reads GADDKKLQTT…GEEKELTELV (66 aa). Residues 150-183 form a disordered region; the sequence is QNMQKQAGTEGKKDEDEDDIPDLVEGENFESNVE. Acidic residues predominate over residues 164–183; sequence EDEDDIPDLVEGENFESNVE.

This sequence belongs to the NAC-beta family. Part of the nascent polypeptide-associated complex (NAC), consisting of egd2 and egd1. NAC associates with ribosomes via egd1.

The protein localises to the cytoplasm. It localises to the nucleus. Its function is as follows. Component of the nascent polypeptide-associated complex (NAC), a dynamic component of the ribosomal exit tunnel, protecting the emerging polypeptides from interaction with other cytoplasmic proteins to ensure appropriate nascent protein targeting. The NAC complex also promotes mitochondrial protein import by enhancing productive ribosome interactions with the outer mitochondrial membrane and blocks the inappropriate interaction of ribosomes translating non-secretory nascent polypeptides with translocation sites in the membrane of the endoplasmic reticulum. EGD1 may act as a transcription factor that exert a negative effect on the expression of several genes that are transcribed by RNA polymerase II. This Neosartorya fischeri (strain ATCC 1020 / DSM 3700 / CBS 544.65 / FGSC A1164 / JCM 1740 / NRRL 181 / WB 181) (Aspergillus fischerianus) protein is Nascent polypeptide-associated complex subunit beta (egd1).